The sequence spans 171 residues: S-ribosylhomocysteine lyase (171 aa).

Fe cation-binding residues include H54, H58, and C128.

The protein belongs to the LuxS family. As to quaternary structure, homodimer. Fe cation serves as cofactor.

It carries out the reaction S-(5-deoxy-D-ribos-5-yl)-L-homocysteine = (S)-4,5-dihydroxypentane-2,3-dione + L-homocysteine. Its function is as follows. Involved in the synthesis of autoinducer 2 (AI-2) which is secreted by bacteria and is used to communicate both the cell density and the metabolic potential of the environment. The regulation of gene expression in response to changes in cell density is called quorum sensing. Catalyzes the transformation of S-ribosylhomocysteine (RHC) to homocysteine (HC) and 4,5-dihydroxy-2,3-pentadione (DPD). The protein is S-ribosylhomocysteine lyase of Yersinia enterocolitica serotype O:8 / biotype 1B (strain NCTC 13174 / 8081).